Here is a 252-residue protein sequence, read N- to C-terminus: 3-dehydroquinate dehydratase (252 aa).

Residues serine 21, 46–48, and arginine 82 each bind 3-dehydroquinate; that span reads EWR. The Proton donor/acceptor role is filled by histidine 143. Residue lysine 170 is the Schiff-base intermediate with substrate of the active site. Residues arginine 213, serine 232, and glutamine 236 each coordinate 3-dehydroquinate.

It belongs to the type-I 3-dehydroquinase family. In terms of assembly, homodimer.

It carries out the reaction 3-dehydroquinate = 3-dehydroshikimate + H2O. The protein operates within metabolic intermediate biosynthesis; chorismate biosynthesis; chorismate from D-erythrose 4-phosphate and phosphoenolpyruvate: step 3/7. Functionally, involved in the third step of the chorismate pathway, which leads to the biosynthesis of aromatic amino acids. Catalyzes the cis-dehydration of 3-dehydroquinate (DHQ) and introduces the first double bond of the aromatic ring to yield 3-dehydroshikimate. The sequence is that of 3-dehydroquinate dehydratase from Salmonella paratyphi A (strain ATCC 9150 / SARB42).